A 750-amino-acid chain; its full sequence is Polyribonucleotide nucleotidyltransferase (750 aa).

Mg(2+) is bound by residues D489 and D495. Positions 556 to 620 constitute a KH domain; sequence PKMITRRIPN…EGIDKVIAKI (65 aa). The S1 motif domain maps to 630–701; it reads GSVYEVKVIK…KTRKDKVSRK (72 aa). A disordered region spans residues 697–750; sequence KVSRKALMEKPEGYKERAPRDRDDKRGSRDNNRGRDNRGRDNRRDDRKPRENKD. Basic and acidic residues predominate over residues 702–750; it reads ALMEKPEGYKERAPRDRDDKRGSRDNNRGRDNRGRDNRRDDRKPRENKD.

It belongs to the polyribonucleotide nucleotidyltransferase family. Mg(2+) serves as cofactor.

Its subcellular location is the cytoplasm. The enzyme catalyses RNA(n+1) + phosphate = RNA(n) + a ribonucleoside 5'-diphosphate. Its function is as follows. Involved in mRNA degradation. Catalyzes the phosphorolysis of single-stranded polyribonucleotides processively in the 3'- to 5'-direction. The chain is Polyribonucleotide nucleotidyltransferase from Christiangramia forsetii (strain DSM 17595 / CGMCC 1.15422 / KT0803) (Gramella forsetii).